The following is a 640-amino-acid chain: 1-deoxy-D-xylulose-5-phosphate synthase (640 aa).

Thiamine diphosphate contacts are provided by residues histidine 77 and alanine 118–alanine 120. Aspartate 149 lines the Mg(2+) pocket. Residues glycine 150–serine 151, asparagine 178, tyrosine 287, and glutamate 369 each bind thiamine diphosphate. Asparagine 178 is a binding site for Mg(2+).

The protein belongs to the transketolase family. DXPS subfamily. In terms of assembly, homodimer. Mg(2+) serves as cofactor. The cofactor is thiamine diphosphate.

It catalyses the reaction D-glyceraldehyde 3-phosphate + pyruvate + H(+) = 1-deoxy-D-xylulose 5-phosphate + CO2. It participates in metabolic intermediate biosynthesis; 1-deoxy-D-xylulose 5-phosphate biosynthesis; 1-deoxy-D-xylulose 5-phosphate from D-glyceraldehyde 3-phosphate and pyruvate: step 1/1. Functionally, catalyzes the acyloin condensation reaction between C atoms 2 and 3 of pyruvate and glyceraldehyde 3-phosphate to yield 1-deoxy-D-xylulose-5-phosphate (DXP). This is 1-deoxy-D-xylulose-5-phosphate synthase from Caulobacter vibrioides (strain NA1000 / CB15N) (Caulobacter crescentus).